Here is a 254-residue protein sequence, read N- to C-terminus: Aspartate/glutamate leucyltransferase (254 aa).

This sequence belongs to the R-transferase family. Bpt subfamily.

Its subcellular location is the cytoplasm. The enzyme catalyses N-terminal L-glutamyl-[protein] + L-leucyl-tRNA(Leu) = N-terminal L-leucyl-L-glutamyl-[protein] + tRNA(Leu) + H(+). It catalyses the reaction N-terminal L-aspartyl-[protein] + L-leucyl-tRNA(Leu) = N-terminal L-leucyl-L-aspartyl-[protein] + tRNA(Leu) + H(+). Functionally, functions in the N-end rule pathway of protein degradation where it conjugates Leu from its aminoacyl-tRNA to the N-termini of proteins containing an N-terminal aspartate or glutamate. The chain is Aspartate/glutamate leucyltransferase from Xylella fastidiosa (strain M12).